The primary structure comprises 492 residues: MATKPTEPVTILSLRKLSLGTAEPQVKEPKTFTVEDAVETIGFGRFHIALFLIMGSTGVVEAMEIMLIAVVSPVIRCEWQLENWQVALVTTMVFFGYMVFSILFGLLADRYGRWKILLISFLWGAYFSLLTSFAPSYIWFVFLRTMVGCGVSGHSQGLIIKTEFLPTKYRGYMLPLSQVFWLAGSLLIIGLASVIIPTIGWRWLIRVASIPGIILIVAFKFIPESARFNVSTGNTRAALATLERVAKMNRSVMPEGKLVEPVLEKRGRFADLLDAKYLRTTLQIWVIWLGISFAYYGVILASAELLERDLVCGSKSDSAVVVTGGDSGESQSPCYCHMFAPSDYRTMIISTIGEIALNPLNILGINFLGRRLSLSITMGCTALFFLLLNICTSSAGLIGFLFMLRALVAANFNTVYIYTAEVYPTTMRALGMGTSGSLCRIGAMVAPFISQVLMSASILGALCLFSSVCVVCAISAFTLPIETKGRALQQIK.

10 helical membrane-spanning segments follow: residues 48–68 (IALF…IMLI), 86–106 (VALV…LFGL), 121–141 (FLWG…IWFV), 179–199 (VFWL…IPTI), 203–223 (WLIR…KFIP), 281–301 (TLQI…VILA), 348–368 (IIST…INFL), 383–403 (LFFL…FLFM), 429–449 (ALGM…APFI), and 458–478 (ILGA…SAFT).

It belongs to the major facilitator superfamily.

Its subcellular location is the membrane. In Homo sapiens (Human), this protein is Putative transporter SVOPL (SVOPL).